Reading from the N-terminus, the 628-residue chain is tRNA uridine 5-carboxymethylaminomethyl modification enzyme MnmG (628 aa).

13 to 18 is a binding site for FAD; the sequence is GAGHAG. 281 to 295 is an NAD(+) binding site; that stretch reads GARYCPSIEDKIKKF.

This sequence belongs to the MnmG family. As to quaternary structure, homodimer. Heterotetramer of two MnmE and two MnmG subunits. FAD serves as cofactor.

Its subcellular location is the cytoplasm. Its function is as follows. NAD-binding protein involved in the addition of a carboxymethylaminomethyl (cmnm) group at the wobble position (U34) of certain tRNAs, forming tRNA-cmnm(5)s(2)U34. The chain is tRNA uridine 5-carboxymethylaminomethyl modification enzyme MnmG from Treponema denticola (strain ATCC 35405 / DSM 14222 / CIP 103919 / JCM 8153 / KCTC 15104).